The primary structure comprises 160 residues: Protein shisa-like-2B (160 aa).

Residues 65–85 (IGALIGLGIAALVLLAFVISV) form a helical membrane-spanning segment.

It belongs to the shisa family.

The protein resides in the membrane. This is Protein shisa-like-2B from Homo sapiens (Human).